The sequence spans 327 residues: GMP reductase (327 aa).

The active-site Thioimidate intermediate is Cys176. 205–228 (IIADGGIRTHGDIAKSIRFGATMV) provides a ligand contact to NADP(+).

This sequence belongs to the IMPDH/GMPR family. GuaC type 2 subfamily.

The catalysed reaction is IMP + NH4(+) + NADP(+) = GMP + NADPH + 2 H(+). In terms of biological role, catalyzes the irreversible NADPH-dependent deamination of GMP to IMP. It functions in the conversion of nucleobase, nucleoside and nucleotide derivatives of G to A nucleotides, and in maintaining the intracellular balance of A and G nucleotides. This is GMP reductase from Streptococcus equi subsp. zooepidemicus (strain H70).